Reading from the N-terminus, the 123-residue chain is Fluoride-specific ion channel FluC (123 aa).

4 helical membrane-spanning segments follow: residues Leu5–Ile25, Phe29–Val49, Leu65–Phe85, and Ile94–Gly114. Gly72 and Thr75 together coordinate Na(+).

This sequence belongs to the fluoride channel Fluc/FEX (TC 1.A.43) family.

The protein localises to the cell membrane. The catalysed reaction is fluoride(in) = fluoride(out). With respect to regulation, na(+) is not transported, but it plays an essential structural role and its presence is essential for fluoride channel function. Fluoride-specific ion channel. Important for reducing fluoride concentration in the cell, thus reducing its toxicity. The chain is Fluoride-specific ion channel FluC from Methanococcus aeolicus (strain ATCC BAA-1280 / DSM 17508 / OCM 812 / Nankai-3).